A 463-amino-acid chain; its full sequence is A-type ATP synthase subunit B (463 aa).

The protein belongs to the ATPase alpha/beta chains family. As to quaternary structure, has multiple subunits with at least A(3), B(3), C, D, E, F, H, I and proteolipid K(x).

The protein resides in the cell membrane. Component of the A-type ATP synthase that produces ATP from ADP in the presence of a proton gradient across the membrane. The B chain is a regulatory subunit. The protein is A-type ATP synthase subunit B of Desulfurococcus sp. (strain SY).